We begin with the raw amino-acid sequence, 271 residues long: Small ribosomal subunit protein uS2 (271 aa).

The interval 223–271 (RALAGSEEGEATEEVTPASEAEKQEVLAEAMSEEGDALQESEVVEEEEK) is disordered. The segment covering 253–271 (MSEEGDALQESEVVEEEEK) has biased composition (acidic residues).

This sequence belongs to the universal ribosomal protein uS2 family.

In Wolinella succinogenes (strain ATCC 29543 / DSM 1740 / CCUG 13145 / JCM 31913 / LMG 7466 / NCTC 11488 / FDC 602W) (Vibrio succinogenes), this protein is Small ribosomal subunit protein uS2.